The sequence spans 218 residues: Adenylate kinase (218 aa).

ATP is bound at residue 10 to 15; it reads GAGKGT. Positions 30–59 are NMP; the sequence is STGDMLRAAVKAGTPLGLQAKAVMDAGQLV. AMP is bound by residues Thr-31, Arg-36, 57-59, 85-88, and Gln-92; these read QLV and GFPR. An LID region spans residues 122 to 159; the sequence is GRRSHPASGRTYHVKFNPPKVEGKDDVTGEPLVQREDD. ATP contacts are provided by residues Arg-123 and 132–133; that span reads TY. The segment at 127–150 is disordered; sequence PASGRTYHVKFNPPKVEGKDDVTG. Residues Arg-156 and Arg-167 each contribute to the AMP site. Gly-203 is an ATP binding site.

It belongs to the adenylate kinase family. In terms of assembly, monomer.

It is found in the cytoplasm. It carries out the reaction AMP + ATP = 2 ADP. The protein operates within purine metabolism; AMP biosynthesis via salvage pathway; AMP from ADP: step 1/1. Catalyzes the reversible transfer of the terminal phosphate group between ATP and AMP. Plays an important role in cellular energy homeostasis and in adenine nucleotide metabolism. In Acidovorax ebreus (strain TPSY) (Diaphorobacter sp. (strain TPSY)), this protein is Adenylate kinase.